A 221-amino-acid polypeptide reads, in one-letter code: Flagellar L-ring protein 1 (221 aa).

The first 16 residues, 1 to 16 (MKRFLILTPMVLALCG), serve as a signal peptide directing secretion. A lipid anchor (N-palmitoyl cysteine) is attached at Cys17. The S-diacylglycerol cysteine moiety is linked to residue Cys17.

It belongs to the FlgH family. The basal body constitutes a major portion of the flagellar organelle and consists of four rings (L,P,S, and M) mounted on a central rod.

Its subcellular location is the cell outer membrane. The protein resides in the bacterial flagellum basal body. Assembles around the rod to form the L-ring and probably protects the motor/basal body from shearing forces during rotation. The chain is Flagellar L-ring protein 1 from Yersinia pestis.